We begin with the raw amino-acid sequence, 288 residues long: Ribosomal RNA small subunit methyltransferase I (288 aa).

It belongs to the methyltransferase superfamily. RsmI family.

The protein localises to the cytoplasm. The catalysed reaction is cytidine(1402) in 16S rRNA + S-adenosyl-L-methionine = 2'-O-methylcytidine(1402) in 16S rRNA + S-adenosyl-L-homocysteine + H(+). Its function is as follows. Catalyzes the 2'-O-methylation of the ribose of cytidine 1402 (C1402) in 16S rRNA. This Vibrio cholerae serotype O1 (strain ATCC 39315 / El Tor Inaba N16961) protein is Ribosomal RNA small subunit methyltransferase I.